A 213-amino-acid chain; its full sequence is Redox-sensing transcriptional repressor Rex (213 aa).

Positions 17–56 (LYYRIFKRFYADQVEKASSKQIADAMGIDSATVRRDFSYF) form a DNA-binding region, H-T-H motif. Position 91 to 96 (91 to 96 (GCGNIG)) interacts with NAD(+).

The protein belongs to the transcriptional regulatory Rex family. In terms of assembly, homodimer.

The protein localises to the cytoplasm. Functionally, modulates transcription in response to changes in cellular NADH/NAD(+) redox state. The polypeptide is Redox-sensing transcriptional repressor Rex (Streptococcus uberis (strain ATCC BAA-854 / 0140J)).